The chain runs to 334 residues: GTP 3',8-cyclase (334 aa).

Residues 11–236 (GFNRKIDYLR…ESTESSQGPA (226 aa)) enclose the Radical SAM core domain. Arginine 20 is a GTP binding site. Positions 27 and 31 each coordinate [4Fe-4S] cluster. Tyrosine 33 contributes to the S-adenosyl-L-methionine binding site. Cysteine 34 provides a ligand contact to [4Fe-4S] cluster. Residue arginine 69 coordinates GTP. Glycine 73 is a binding site for S-adenosyl-L-methionine. Threonine 100 provides a ligand contact to GTP. Serine 124 contacts S-adenosyl-L-methionine. Residue lysine 161 participates in GTP binding. Methionine 195 contacts S-adenosyl-L-methionine. Residues cysteine 260 and cysteine 263 each coordinate [4Fe-4S] cluster. 265 to 267 (RVR) provides a ligand contact to GTP. [4Fe-4S] cluster is bound at residue cysteine 277.

It belongs to the radical SAM superfamily. MoaA family. Monomer and homodimer. It depends on [4Fe-4S] cluster as a cofactor.

The catalysed reaction is GTP + AH2 + S-adenosyl-L-methionine = (8S)-3',8-cyclo-7,8-dihydroguanosine 5'-triphosphate + 5'-deoxyadenosine + L-methionine + A + H(+). It functions in the pathway cofactor biosynthesis; molybdopterin biosynthesis. In terms of biological role, catalyzes the cyclization of GTP to (8S)-3',8-cyclo-7,8-dihydroguanosine 5'-triphosphate. This Pseudomonas putida (strain W619) protein is GTP 3',8-cyclase.